A 218-amino-acid polypeptide reads, in one-letter code: Cytochrome P450 3A19 (218 aa).

C153 is a binding site for heme.

It belongs to the cytochrome P450 family. It depends on heme as a cofactor.

Its subcellular location is the endoplasmic reticulum membrane. The protein resides in the microsome membrane. The enzyme catalyses an organic molecule + reduced [NADPH--hemoprotein reductase] + O2 = an alcohol + oxidized [NADPH--hemoprotein reductase] + H2O + H(+). Functionally, cytochromes P450 are a group of heme-thiolate monooxygenases. In liver microsomes, this enzyme is involved in an NADPH-dependent electron transport pathway. It oxidizes a variety of structurally unrelated compounds, including steroids, fatty acids, and xenobiotics. The polypeptide is Cytochrome P450 3A19 (CYP3A19) (Capra hircus aegagrus (Wild goat)).